Reading from the N-terminus, the 395-residue chain is Putative 8-amino-7-oxononanoate synthase (395 aa).

Arginine 23 is a substrate binding site. A pyridoxal 5'-phosphate-binding site is contributed by 110-111 (GY). Histidine 135 is a substrate binding site. Pyridoxal 5'-phosphate-binding positions include serine 181, 206–209 (DEAH), and 237–240 (TFSK). An N6-(pyridoxal phosphate)lysine modification is found at lysine 240. Residue threonine 354 coordinates substrate.

This sequence belongs to the class-II pyridoxal-phosphate-dependent aminotransferase family. BioF subfamily. As to quaternary structure, homodimer. The cofactor is pyridoxal 5'-phosphate.

It carries out the reaction 6-carboxyhexanoyl-[ACP] + L-alanine + H(+) = (8S)-8-amino-7-oxononanoate + holo-[ACP] + CO2. Its pathway is cofactor biosynthesis; biotin biosynthesis. Its function is as follows. Catalyzes the decarboxylative condensation of pimeloyl-[acyl-carrier protein] and L-alanine to produce 8-amino-7-oxononanoate (AON), [acyl-carrier protein], and carbon dioxide. This chain is Putative 8-amino-7-oxononanoate synthase (bioF), found in Halalkalibacterium halodurans (strain ATCC BAA-125 / DSM 18197 / FERM 7344 / JCM 9153 / C-125) (Bacillus halodurans).